Here is a 313-residue protein sequence, read N- to C-terminus: Methionyl-tRNA formyltransferase (313 aa).

Residue 113–116 (SLLP) coordinates (6S)-5,6,7,8-tetrahydrofolate.

Belongs to the Fmt family.

It catalyses the reaction L-methionyl-tRNA(fMet) + (6R)-10-formyltetrahydrofolate = N-formyl-L-methionyl-tRNA(fMet) + (6S)-5,6,7,8-tetrahydrofolate + H(+). Functionally, attaches a formyl group to the free amino group of methionyl-tRNA(fMet). The formyl group appears to play a dual role in the initiator identity of N-formylmethionyl-tRNA by promoting its recognition by IF2 and preventing the misappropriation of this tRNA by the elongation apparatus. In Acidithiobacillus ferrooxidans (strain ATCC 23270 / DSM 14882 / CIP 104768 / NCIMB 8455) (Ferrobacillus ferrooxidans (strain ATCC 23270)), this protein is Methionyl-tRNA formyltransferase.